A 367-amino-acid chain; its full sequence is tRNA-specific 2-thiouridylase MnmA (367 aa).

ATP-binding positions include 24–31 (AMSGGVDS) and L50. The active-site Nucleophile is C115. C115 and C211 are disulfide-bonded. G139 contributes to the ATP binding site. Positions 161–163 (KDQ) are interaction with tRNA. C211 serves as the catalytic Cysteine persulfide intermediate.

Belongs to the MnmA/TRMU family.

The protein resides in the cytoplasm. It catalyses the reaction S-sulfanyl-L-cysteinyl-[protein] + uridine(34) in tRNA + AH2 + ATP = 2-thiouridine(34) in tRNA + L-cysteinyl-[protein] + A + AMP + diphosphate + H(+). Its function is as follows. Catalyzes the 2-thiolation of uridine at the wobble position (U34) of tRNA, leading to the formation of s(2)U34. This chain is tRNA-specific 2-thiouridylase MnmA, found in Ehrlichia canis (strain Jake).